Consider the following 424-residue polypeptide: S-inosyl-L-homocysteine hydrolase (424 aa).

Residues Asp130 and Glu155 each coordinate substrate. 156 to 158 (TTT) is an NAD(+) binding site. Residues Lys185 and Asp189 each contribute to the substrate site. Residues Asn190, 219–224 (GYGWCG), Glu242, Asn277, 298–300 (AGH), and Asn346 contribute to the NAD(+) site.

The protein belongs to the adenosylhomocysteinase family. It depends on NAD(+) as a cofactor.

Its subcellular location is the cytoplasm. It carries out the reaction S-inosyl-L-homocysteine + H2O = L-homocysteine + inosine. Its pathway is amino-acid biosynthesis; S-adenosyl-L-methionine biosynthesis. Catalyzes the hydrolysis of S-inosyl-L-homocysteine (SIH) to L-homocysteine (Hcy) and inosine. Likely functions in a S-adenosyl-L-methionine (SAM) recycling pathway from S-adenosyl-L-homocysteine (SAH) produced from SAM-dependent methylation reactions. Can also catalyze the reverse reaction in vitro, i.e. the synthesis of SIH from Hcy and inosine. The protein is S-inosyl-L-homocysteine hydrolase of Methanopyrus kandleri (strain AV19 / DSM 6324 / JCM 9639 / NBRC 100938).